A 297-amino-acid chain; its full sequence is MSKIFVNPSAIRAGLADLEMAEETVDLINRNIEDNQAHLQGEPIEVDNLPEDMKRLHLDDEKSSNLGEMVRVGEGKYREDFQMDEGEDPNLLFQSYLDNVGVQIVRQMRSGERFLKIWSQTVEEIVSYVTVNFPNPPRRSSEDKSTQTTGRELKKETTSAFSQRESQPSKARMVAQVAPGPPALEWSATNEEDDLSVEAEIAHQIAESFSKKYKFPSRSSGIFLYNFEQLKMNLDDIVKEAKNVPGVTRLAHDGSKIPLRCVLGWVALANSKKFQLLVEADKLSKIMQDDLNRYTSC.

Residues 49 to 58 (LPEDMKRLHL) carry the Nuclear export signal motif. A phosphoserine; by host mark is found at Ser-63 and Ser-64. A disordered region spans residues 132–177 (NFPNPPRRSSEDKSTQTTGRELKKETTSAFSQRESQPSKARMVAQV). The tract at residues 138–172 (RRSSEDKSTQTTGRELKKETTSAFSQRESQPSKAR) is DYNLL1 and DYNLL2 binding. Basic and acidic residues predominate over residues 139 to 157 (RSSEDKSTQTTGRELKKET). Positions 158–169 (TSAFSQRESQPS) are enriched in polar residues. Phosphoserine; by host PKC occurs at positions 162 and 210. The Nuclear localization signal signature appears at 211-214 (KKYK). Ser-271 carries the post-translational modification Phosphoserine; by host PKC.

It belongs to the lyssavirus protein P family. In terms of assembly, homotrimer when phosphorylated. This trimer is stabilized by binding to the L protein. Binds soluble protein N, and ribonucleocapsid. Interacts with host DYNLL1 and DYNLL2; this interaction may play a role in intracellular microtubule-dependent virus transport of incoming virus. Interacts with host STAT1, STAT2 and PML. Interacts with host TBK1. Binds host PML. Phosphorylated by host PKC and by an unknown kinase.

Its subcellular location is the virion. The protein resides in the host cytoplasm. It is found in the host nucleus. Its function is as follows. Non catalytic polymerase cofactor and regulatory protein that plays a role in viral transcription and replication. Stabilizes the RNA polymerase L to the N-RNA template and binds the soluble protein N, preventing it from encapsidating non-genomic RNA. Also inhibits host IFN-alpha and IFN-beta signaling by binding and retaining phosphorylated STAT1 in the cytoplasm or by inhibiting the DNA binding of STAT1 in the nucleus. Might be involved, through interaction with host dynein, in intracellular microtubule-dependent virus transport of incoming virus from the synapse toward the cell body. Inhibits interferon induction pathways by interacting with host TBK1 and preventing the formation of dynamic cytoplasmic condensates that have liquid properties and that are essential for interferon production. This Rabies virus (strain CVS-11) (RABV) protein is Phosphoprotein (P).